The chain runs to 176 residues: Woronin body major protein (176 aa).

A propeptide spanning residues 1-16 (MGYYDDDAHGHVEADA) is cleaved from the precursor. A compositionally biased stretch (basic and acidic residues) spans 1–16 (MGYYDDDAHGHVEADA). The segment at 1 to 31 (MGYYDDDAHGHVEADAAPRATTGTGTGSASQ) is disordered. The Microbody targeting signal motif lies at 174-176 (SRL).

The protein belongs to the eIF-5A family. Hex1 subfamily. Forms oligomers. Self-assembles into hexagonal rods.

The protein localises to the cell septum. Its function is as follows. Major component of Woronin bodies, fungal-specific organelles that occlude septal pores in order to separate intact from damaged compartments. Hex-1 binds directly or indirectly to the Woronin body tether that in turn is anchored at the rim of the septal pore. The sequence is that of Woronin body major protein from Neurospora crassa (strain ATCC 24698 / 74-OR23-1A / CBS 708.71 / DSM 1257 / FGSC 987).